We begin with the raw amino-acid sequence, 895 residues long: Pentatricopeptide repeat-containing protein At1g74600, chloroplastic (895 aa).

Residues 1–71 (MNCLANESLN…CNLRTTKILQ (71 aa)) constitute a chloroplast transit peptide. PPR repeat units follow at residues 83–113 (DVFLTKSLLSWYSNSGSMADAAKLFDTIPQP), 114–148 (DVVSCNIMISGYKQHRLFEESLRFFSKMHFLGFEA), 149–183 (NEISYGSVISACSALQAPLFSELVCCHTIKMGYFF), 184–214 (YEVVESALIDVFSKNLRFEDAYKVFRDSLSA), 215–249 (NVYCWNTIIAGALRNQNYGAVFDLFHEMCVGFQKP), 250–280 (DSYTYSSVLAACASLEKLRFGKVVQARVIKC), 284–314 (DVFVCTAIVDLYAKCGHMAEAMEVFSRIPNP), 315–349 (SVVSWTVMLSGYTKSNDAFSALEIFKEMRHSGVEI), 350–384 (NNCTVTSVISACGRPSMVCEASQVHAWVFKSGFYL), 385–415 (DSSVAAALISMYSKSGDIDLSEQVFEDLDDI), 417–451 (RQNIVNVMITSFSQSKKPGKAIRLFTRMLQEGLRT), 452–483 (DEFSVCSLLSVLDCLNLGKQVHGYTLKSGLVL), 484–514 (DLTVGSSLFTLYSKCGSLEESYKLFQGIPFK), 515–549 (DNACWASMISGFNEYGYLREAIGLFSEMLDDGTSP), 550–584 (DESTLAAVLTVCSSHPSLPRGKEIHGYTLRAGIDK), 585–615 (GMDLGSALVNMYSKCGSLKLARQVYDRLPEL), 616–650 (DPVSCSSLISGYSQHGLIQDGFLLFRDMVMSGFTM), 651–685 (DSFAISSILKAAALSDESSLGAQVHAYITKIGLCT), 686–716 (EPSVGSSLLTMYSKFGSIDDCCKAFSQINGP), 717–751 (DLIAWTALIASYAQHGKANEALQVYNLMKEKGFKP), 752–787 (DKVTFVGVLSACSHGGLVEESYFHLNSMVKDYGIEP), and 788–818 (ENRHYVCMVDALGRSGRLREAESFINNMHIK). Residues 824-895 (WGTLLAACKI…VQKEPGWSSV (72 aa)) form a type E motif; degenerate region.

It belongs to the PPR family. PCMP-E subfamily.

It is found in the plastid. The protein localises to the chloroplast. The chain is Pentatricopeptide repeat-containing protein At1g74600, chloroplastic (PCMP-E69) from Arabidopsis thaliana (Mouse-ear cress).